We begin with the raw amino-acid sequence, 256 residues long: Thiazole synthase (256 aa).

The active-site Schiff-base intermediate with DXP is Lys-96. Residues Gly-157, 184 to 185 (AG), and 206 to 207 (NT) each bind 1-deoxy-D-xylulose 5-phosphate.

Belongs to the ThiG family. Homotetramer. Forms heterodimers with either ThiH or ThiS.

The protein resides in the cytoplasm. It carries out the reaction [ThiS sulfur-carrier protein]-C-terminal-Gly-aminoethanethioate + 2-iminoacetate + 1-deoxy-D-xylulose 5-phosphate = [ThiS sulfur-carrier protein]-C-terminal Gly-Gly + 2-[(2R,5Z)-2-carboxy-4-methylthiazol-5(2H)-ylidene]ethyl phosphate + 2 H2O + H(+). Its pathway is cofactor biosynthesis; thiamine diphosphate biosynthesis. Functionally, catalyzes the rearrangement of 1-deoxy-D-xylulose 5-phosphate (DXP) to produce the thiazole phosphate moiety of thiamine. Sulfur is provided by the thiocarboxylate moiety of the carrier protein ThiS. In vitro, sulfur can be provided by H(2)S. This Bartonella tribocorum (strain CIP 105476 / IBS 506) protein is Thiazole synthase.